Here is a 430-residue protein sequence, read N- to C-terminus: Tol-Pal system protein TolB (430 aa).

The first 21 residues, 1 to 21 (MKQAFRVALGFLILWASVLHA), serve as a signal peptide directing secretion.

Belongs to the TolB family. In terms of assembly, the Tol-Pal system is composed of five core proteins: the inner membrane proteins TolA, TolQ and TolR, the periplasmic protein TolB and the outer membrane protein Pal. They form a network linking the inner and outer membranes and the peptidoglycan layer.

It localises to the periplasm. Functionally, part of the Tol-Pal system, which plays a role in outer membrane invagination during cell division and is important for maintaining outer membrane integrity. TolB occupies a key intermediary position in the Tol-Pal system because it communicates directly with both membrane-embedded components, Pal in the outer membrane and TolA in the inner membrane. The protein is Tol-Pal system protein TolB of Serratia proteamaculans (strain 568).